A 212-amino-acid polypeptide reads, in one-letter code: dTTP/UTP pyrophosphatase (212 aa).

Catalysis depends on D88, which acts as the Proton acceptor.

It belongs to the Maf family. YhdE subfamily. Requires a divalent metal cation as cofactor.

It is found in the cytoplasm. It catalyses the reaction dTTP + H2O = dTMP + diphosphate + H(+). The catalysed reaction is UTP + H2O = UMP + diphosphate + H(+). Nucleoside triphosphate pyrophosphatase that hydrolyzes dTTP and UTP. May have a dual role in cell division arrest and in preventing the incorporation of modified nucleotides into cellular nucleic acids. The protein is dTTP/UTP pyrophosphatase of Colwellia psychrerythraea (strain 34H / ATCC BAA-681) (Vibrio psychroerythus).